The following is a 223-amino-acid chain: MTKQHANWSPYDNNGGTCVAIAGSDYCVIAADTRMSTGYSILSRDYSKIHKLADRAVLSSSGFQADVKALQKVLKSRHLIYQHQHNKQMSCPAMAQLLSNTLYFKRFFPYYAFNVLGGLDEEGKGCVFTYDAVGSYERVGYGAQGSGSTLIMPFLDNQLKSPSPLLLPKQDSNTPLSEAEAVDLVKTVFASATERDIYTGDKLEIMILKADGIKTELMDLRKD.

The protein belongs to the peptidase T1B family. As to quaternary structure, component of the 20S core complex of the 26S proteasome. The 26S proteasome is composed of a core protease (CP), known as the 20S proteasome, capped at one or both ends by the 19S regulatory particle (RP/PA700). The 20S proteasome core is composed of 28 subunits that are arranged in four stacked rings, resulting in a barrel-shaped structure. The two end rings are each formed by seven alpha subunits, and the two central rings are each formed by seven beta subunits. The catalytic chamber with the active sites is on the inside of the barrel. As to expression, present in all tissues examined. Slightly lower levels in roots.

It localises to the cytoplasm. It is found in the nucleus. In terms of biological role, non-catalytic component of the proteasome, a multicatalytic proteinase complex which is characterized by its ability to cleave peptides with Arg, Phe, Tyr, Leu, and Glu adjacent to the leaving group at neutral or slightly basic pH. The proteasome has an ATP-dependent proteolytic activity. This Arabidopsis thaliana (Mouse-ear cress) protein is Proteasome subunit beta type-1 (PBF1).